The sequence spans 125 residues: Small ribosomal subunit protein uS13 (125 aa).

Residues 93-125 are disordered; it reads RRGLPVRGQRTKTNARTRKGPKRTVAGKKKAGR.

It belongs to the universal ribosomal protein uS13 family. Part of the 30S ribosomal subunit. Forms a loose heterodimer with protein S19. Forms two bridges to the 50S subunit in the 70S ribosome.

In terms of biological role, located at the top of the head of the 30S subunit, it contacts several helices of the 16S rRNA. In the 70S ribosome it contacts the 23S rRNA (bridge B1a) and protein L5 of the 50S subunit (bridge B1b), connecting the 2 subunits; these bridges are implicated in subunit movement. Contacts the tRNAs in the A and P-sites. This is Small ribosomal subunit protein uS13 from Renibacterium salmoninarum (strain ATCC 33209 / DSM 20767 / JCM 11484 / NBRC 15589 / NCIMB 2235).